A 490-amino-acid polypeptide reads, in one-letter code: GTPase Der (490 aa).

EngA-type G domains follow at residues 3–166 and 203–376; these read PVVA…MEDL and IKLA…DSST. Residues 9-16, 56-60, 118-121, 209-216, 256-260, and 321-324 contribute to the GTP site; these read GRPNVGKS, DTGGI, NKTD, DTAGV, and NKWD. The KH-like domain maps to 377-461; sequence RRVGTSMLTR…PIRIQFKEGE (85 aa).

This sequence belongs to the TRAFAC class TrmE-Era-EngA-EngB-Septin-like GTPase superfamily. EngA (Der) GTPase family. Associates with the 50S ribosomal subunit.

Its function is as follows. GTPase that plays an essential role in the late steps of ribosome biogenesis. The polypeptide is GTPase Der (Shigella flexneri serotype 5b (strain 8401)).